Reading from the N-terminus, the 1054-residue chain is MAGNDWINSYLEAILDVGPGIDEAKGSLLLRERGRFSPTRYFVEEVVSGFDETDLHRSWIRAQATRSPQERNTRLENMCWRIWNLARQKKQLENEEAQRMAKRRLERERGRREAVADMSEDLSEGEKGDIVVDHSHHGESNRGRLPRINSVDTMEAWMNQQKGKKLYIVLISLHGLIRGENMELGRDSDTGGQVKYVVELARALGSMPGVYRVDLLTRQVSSPEVDWSYGEPTEMLPPRNSENMMDEMGESSGSYIVRIPFGPKDKYVAKELLWPHIPEFVDGALGHIIQMSKVLGEQIGNGHPIWPAAIHGHYADAGDSAALLSGALNVPMLFTGHSLGRDKLEQLLRQGRLSRDEINSTYKIMRRIEAEELSLDASEMVITSTRQEIEEQWRLYDGFDPILERKLRARIKRNVSCYGRFMPRMMVIPPGMEFHHIVPHDGDLDAEPEFNEDSKSPDPHIWTEIMRFFSNPRKPMILALARPDPKKNLTTLVKAFGECKPLRELANLTLIMGNRDNIDEMSGTNASVLLSILKMIDKYDLYGLVAYPKHHKQSDVPDIYRLAAKTKGVFINPAFIEPFGLTLIEAAAHGLPIVATKNGGPVDIHRVLDNGILVDPHNQESIADALLKLVAEKHLWAKCRANGLKNIHLFSWPEHCKSYLSKLASCKPRQPRWLRNEEDDDENSESDSPSDSLRDIQDISLNLKFSFDGDKNESREKGGGSHPDDRASKIENAVLEWSKGVAKGPQRSMSIEKGEHNSNAGKFPALRRRKIMFVIAVDCKPSAGLSESVRKVFAAVENERAEGSVGFILATSFNISEIRHFLVSEKLNPTDFDAFICNSGGDLYYSSHHSEDNPFVVDLYYHSQIEYRWGGEGLRKTLVRWAASITDKKGEKEEHVIIEDEETSADYCYSFKVQKPNVVPPVKEARKVMRIQALRCHVVYCQNGNKINVIPVLASRAQALRYLYLRWGMELSKTVVVVGESGDTDYEEMLGGVHKTVVLSGVCTTATNLLHANRSYPLADVVCFDDLNIFKTHNEECSSTDLRALLEEHGAFKA.

Residues 104-115 are compositionally biased toward basic and acidic residues; the sequence is RLERERGRREAV. Disordered regions lie at residues 104–125, 674–693, and 708–727; these read RLER…LSEG, LRNE…SDSL, and DGDK…DDRA.

The protein belongs to the glycosyltransferase 1 family. As to quaternary structure, homodimer or homotetramer.

It catalyses the reaction beta-D-fructose 6-phosphate + UDP-alpha-D-glucose = sucrose 6(F)-phosphate + UDP + H(+). It functions in the pathway glycan biosynthesis; sucrose biosynthesis; sucrose from D-fructose 6-phosphate and UDP-alpha-D-glucose: step 1/2. With respect to regulation, activity is regulated by phosphorylation and moderated by concentration of metabolites and light. Its function is as follows. Plays a role in photosynthetic sucrose synthesis by catalyzing the rate-limiting step of sucrose biosynthesis from UDP-glucose and fructose- 6-phosphate. Involved in the regulation of carbon partitioning in the leaves of plants. May regulate the synthesis of sucrose and therefore play a major role as a limiting factor in the export of photoassimilates out of the leaf. Plays a role for sucrose availability that is essential for plant growth and fiber elongation. This chain is Probable sucrose-phosphate synthase 1 (SPS1), found in Craterostigma plantagineum (Blue gem).